The following is a 596-amino-acid chain: Linalool synthase TPS3, chloroplastic (596 aa).

The transit peptide at 1-39 (MISSLNPLFTTHRSGVIAQQFFASSAAASINSVSSLKIA) directs the protein to the chloroplast. Residues Arg308, Asp345, Asp349, Arg486, and Asn489 each coordinate (2E)-geranyl diphosphate. The Mg(2+) site is built by Asp345 and Asp349. The DDXXD motif signature appears at 345-349 (DDIYD). Residues Asn489, Thr493, and Ser497 each contribute to the Mg(2+) site.

It belongs to the terpene synthase family. Tpsb subfamily. As to quaternary structure, monomer. Mg(2+) is required as a cofactor. Requires Mn(2+) as cofactor. Expressed in flowers and fruits.

Its subcellular location is the plastid. The protein localises to the chloroplast. It catalyses the reaction (2E)-geranyl diphosphate = beta-myrcene + diphosphate. The enzyme catalyses (2E)-geranyl diphosphate + H2O = linalool + diphosphate. It carries out the reaction (2E)-geranyl diphosphate = (Z)-beta-ocimene + diphosphate. The catalysed reaction is (2E)-geranyl diphosphate = (E)-beta-ocimene + diphosphate. The protein operates within secondary metabolite biosynthesis; terpenoid biosynthesis. Monoterpene synthase (mono-TPS) involved in the biosynthesis of monoterpenes natural products, constituent of coffee beverage aroma. Catalyzes the conversion of (2E)-geranyl diphosphate (GPP) into linalool and beta-myrcene, and, as minor products, cis-ocimene and trans-ocimene. Not able to use geranylgeranyl pyrophosphate (GGPP) and farnesyl pyrophosphate (FPP) as substrates. The chain is Linalool synthase TPS3, chloroplastic from Coffea arabica (Arabian coffee).